The following is a 307-amino-acid chain: Putative transcription factor bHLH086 (307 aa).

Disordered regions lie at residues 1–49 (MSLI…DHQN) and 167–215 (HEST…QSLA). 2 stretches are compositionally biased toward polar residues: residues 12 to 28 (NYIS…SPQN) and 183 to 197 (GENT…SGTN). Residues 207–220 (SPKDPQSLAAKNRR) are basic motif. Residues 207 to 256 (SPKDPQSLAAKNRRERISERLKVLQELVPNGTKVDLVTMLEKAIGYVKFL) enclose the bHLH domain. Residues 221-256 (ERISERLKVLQELVPNGTKVDLVTMLEKAIGYVKFL) form a helix-loop-helix motif region.

Homodimer. Forms heterodimers with RHD6. Interacts with TIFY10B/JAZ2, TIFY6A/JAZ4, TIFY5A/JAZ8, TIFY7/JAZ9 and TIFY9/JAZ10.

Its subcellular location is the nucleus. In terms of biological role, transcription factor that is specifically required for the development of root hairs. Acts with RHD6 to positively regulate root hair development. Acts downstream of genes that regulate epidermal pattern formation, such as GL2. Acts with RHD6 as transcription factor that integrates a jasmonate (JA) signaling pathway that stimulates root hair growth. This Arabidopsis thaliana (Mouse-ear cress) protein is Putative transcription factor bHLH086.